We begin with the raw amino-acid sequence, 297 residues long: Bifunctional protein FolD 2 (297 aa).

NADP(+) contacts are provided by residues 173 to 175 (GKS), serine 198, and isoleucine 239.

The protein belongs to the tetrahydrofolate dehydrogenase/cyclohydrolase family. Homodimer.

The enzyme catalyses (6R)-5,10-methylene-5,6,7,8-tetrahydrofolate + NADP(+) = (6R)-5,10-methenyltetrahydrofolate + NADPH. It catalyses the reaction (6R)-5,10-methenyltetrahydrofolate + H2O = (6R)-10-formyltetrahydrofolate + H(+). It functions in the pathway one-carbon metabolism; tetrahydrofolate interconversion. Catalyzes the oxidation of 5,10-methylenetetrahydrofolate to 5,10-methenyltetrahydrofolate and then the hydrolysis of 5,10-methenyltetrahydrofolate to 10-formyltetrahydrofolate. This is Bifunctional protein FolD 2 from Sinorhizobium medicae (strain WSM419) (Ensifer medicae).